A 283-amino-acid chain; its full sequence is Thymidylate synthase (283 aa).

DUMP is bound at residue Arg22. The Nucleophile role is filled by Cys160. DUMP contacts are provided by residues 180-183, Asn191, and 221-223; these read RSCD and HIY. Residue Asp183 coordinates (6R)-5,10-methylene-5,6,7,8-tetrahydrofolate. A (6R)-5,10-methylene-5,6,7,8-tetrahydrofolate-binding site is contributed by Ser282.

It belongs to the thymidylate synthase family. Bacterial-type ThyA subfamily. Homodimer.

It localises to the cytoplasm. It carries out the reaction dUMP + (6R)-5,10-methylene-5,6,7,8-tetrahydrofolate = 7,8-dihydrofolate + dTMP. Its pathway is pyrimidine metabolism; dTTP biosynthesis. In terms of biological role, catalyzes the reductive methylation of 2'-deoxyuridine-5'-monophosphate (dUMP) to 2'-deoxythymidine-5'-monophosphate (dTMP) while utilizing 5,10-methylenetetrahydrofolate (mTHF) as the methyl donor and reductant in the reaction, yielding dihydrofolate (DHF) as a by-product. This enzymatic reaction provides an intracellular de novo source of dTMP, an essential precursor for DNA biosynthesis. The chain is Thymidylate synthase from Marinomonas sp. (strain MWYL1).